Here is a 78-residue protein sequence, read N- to C-terminus: Small ribosomal subunit protein bS18 (78 aa).

This sequence belongs to the bacterial ribosomal protein bS18 family. As to quaternary structure, part of the 30S ribosomal subunit. Forms a tight heterodimer with protein bS6.

Binds as a heterodimer with protein bS6 to the central domain of the 16S rRNA, where it helps stabilize the platform of the 30S subunit. This Lactobacillus delbrueckii subsp. bulgaricus (strain ATCC 11842 / DSM 20081 / BCRC 10696 / JCM 1002 / NBRC 13953 / NCIMB 11778 / NCTC 12712 / WDCM 00102 / Lb 14) protein is Small ribosomal subunit protein bS18.